A 116-amino-acid polypeptide reads, in one-letter code: PTS system cellobiose-specific EIIA component (116 aa).

Positions aspartate 11–arginine 109 constitute a PTS EIIA type-3 domain. Catalysis depends on histidine 85, which acts as the Tele-phosphohistidine intermediate. Histidine 85 is subject to Phosphohistidine; by HPr. Aspartate 88 contributes to the Mg(2+) binding site.

As to quaternary structure, homotrimer. Requires Mg(2+) as cofactor.

Functionally, the phosphoenolpyruvate-dependent sugar phosphotransferase system (sugar PTS), a major carbohydrate active transport system, catalyzes the phosphorylation of incoming sugar substrates concomitantly with their translocation across the cell membrane. Involved in cellobiose transport with PtcB and CelB. This system can also transport lactose. This Lactococcus lactis subsp. lactis (strain IL1403) (Streptococcus lactis) protein is PTS system cellobiose-specific EIIA component.